A 205-amino-acid polypeptide reads, in one-letter code: Large ribosomal subunit protein uL4 (205 aa).

Residues 43–60 (ARSGNRAQQTRAEVSAST) are compositionally biased toward polar residues. Residues 43–96 (ARSGNRAQQTRAEVSASTHKPWRQKGTGRARSGRASSPIWRGGGVTFPNKPNEN) are disordered. The segment covering 62–74 (KPWRQKGTGRARS) has biased composition (basic residues).

Belongs to the universal ribosomal protein uL4 family. Part of the 50S ribosomal subunit.

Functionally, one of the primary rRNA binding proteins, this protein initially binds near the 5'-end of the 23S rRNA. It is important during the early stages of 50S assembly. It makes multiple contacts with different domains of the 23S rRNA in the assembled 50S subunit and ribosome. Its function is as follows. Forms part of the polypeptide exit tunnel. In Thiobacillus denitrificans (strain ATCC 25259 / T1), this protein is Large ribosomal subunit protein uL4.